The chain runs to 487 residues: 3-octaprenyl-4-hydroxybenzoate carboxy-lyase (487 aa).

Position 172 (Asn172) interacts with Mn(2+). Prenylated FMN contacts are provided by residues Ile175–Arg177, Arg189–Leu191, and Arg194–Gly195. Residue Glu238 coordinates Mn(2+). The active-site Proton donor is the Asp287.

This sequence belongs to the UbiD family. As to quaternary structure, homohexamer. The cofactor is prenylated FMN. It depends on Mn(2+) as a cofactor.

It localises to the cell membrane. The enzyme catalyses a 4-hydroxy-3-(all-trans-polyprenyl)benzoate + H(+) = a 2-(all-trans-polyprenyl)phenol + CO2. The protein operates within cofactor biosynthesis; ubiquinone biosynthesis. Its function is as follows. Catalyzes the decarboxylation of 3-octaprenyl-4-hydroxy benzoate to 2-octaprenylphenol, an intermediate step in ubiquinone biosynthesis. This Nitrosococcus oceani (strain ATCC 19707 / BCRC 17464 / JCM 30415 / NCIMB 11848 / C-107) protein is 3-octaprenyl-4-hydroxybenzoate carboxy-lyase.